A 167-amino-acid chain; its full sequence is Putative defense protein Hdd11-like (167 aa).

Residues 1-18 (MMFTYVVAVASVVALTSA) form the signal peptide. One can recognise a Reelin domain in the interval 19-167 (YPTGAPPSAC…ESAPVKVLSH (149 aa)). Cys28 and Cys105 are disulfide-bonded.

The protein belongs to the insect defense protein family. In larvae, high expression in the fat body and low expression in midgut, hemocytes and malpighian tubules. No expression in silkgland.

The protein resides in the secreted. Its function is as follows. May have antimicrobial activity. The polypeptide is Putative defense protein Hdd11-like (Samia ricini (Indian eri silkmoth)).